Consider the following 577-residue polypeptide: Monooxygenase PC-14 (577 aa).

The protein belongs to the FMO family. It depends on FAD as a cofactor.

It functions in the pathway secondary metabolite biosynthesis. Monooxygenase; part of the gene cluster that mediates the biosynthesis of the indole diterpenes penitrems. The geranylgeranyl diphosphate (GGPP) synthase penG catalyzes the first step in penitrem biosynthesis via conversion of farnesyl pyrophosphate and isopentyl pyrophosphate into geranylgeranyl pyrophosphate (GGPP). Condensation of indole-3-glycerol phosphate with GGPP by the prenyl transferase penC then forms 3-geranylgeranylindole (3-GGI). Epoxidation by the FAD-dependent monooxygenase penM leads to a epoxidized-GGI that is substrate of the terpene cyclase penB for cyclization to yield paspaline. Paspaline is subsequently converted to 13-desoxypaxilline by the cytochrome P450 monooxygenase penP, the latter being then converted to paxilline by the cytochrome P450 monooxygenase penQ. Paxilline is converted to beta-paxitriol via C-10 ketoreduction by the short-chain dehydrogenase PC-15 which can be monoprenylated at the C-20 by the indole diterpene prenyltransferase penD. A two-step elimination (acetylation and elimination) process performed by the O-acetyltransferase PC-16 and the P.simplicissimum ptmI-ortholog not yet identified in P.crustosum, leads to the production of the prenylated form of penijanthine. The FAD-linked oxidoreductase ptmO then converts the prenylated form of penijanthine into PC-M5 which is in turn transformed into PC-M4 by the aromatic dimethylallyltransferase PC-22. A series of oxidation steps involving 4 cytochrome P450 monooxygenases (PC-21, PC-05, PC-23, PC-20) and a FAD-dependent monooxygenase (PC-14) are required for the transformation of PC-M4 to penitrems A and E. Synthesis of these final products is proposed to proceed via penitrems D and C (PC-21, PC-05, PC-14) and penitrems B and F (PC-21, PC-05, PC-14, PC-23). This is Monooxygenase PC-14 from Penicillium crustosum (Blue mold fungus).